The primary structure comprises 179 residues: MQTPVSVNEKKDFIRWFLNHYQLKRRECVWILNYLMSHDSLMEKVHFVEQAEFCPRGIIMSTHCVEEVPFRFYKENVMTTDAEKSFHDIRLNKQQDLFIQLNFRSAYNSPEYAAVLEANPHIPKDLYENEKDKIVAEQILEHSIATFQRQKLLREIDEALDRQDKESFEKLAKQLSQLR.

The protein belongs to the UPF0302 family.

The sequence is that of UPF0302 protein BLi02393/BL02764 from Bacillus licheniformis (strain ATCC 14580 / DSM 13 / JCM 2505 / CCUG 7422 / NBRC 12200 / NCIMB 9375 / NCTC 10341 / NRRL NRS-1264 / Gibson 46).